The chain runs to 445 residues: GTPase Der (445 aa).

EngA-type G domains follow at residues 3–167 (PVIA…YADQ) and 180–353 (IKIA…AAAM). Residues 9 to 16 (GRPNVGKS), 56 to 60 (DTGGF), 119 to 122 (NKAE), 186 to 193 (GRPNVGKS), 233 to 237 (DTAGL), and 298 to 301 (NKWD) each bind GTP. The KH-like domain maps to 354–438 (AKLPTPKLTR…PLRIEFRSST (85 aa)).

The protein belongs to the TRAFAC class TrmE-Era-EngA-EngB-Septin-like GTPase superfamily. EngA (Der) GTPase family. Associates with the 50S ribosomal subunit.

In terms of biological role, GTPase that plays an essential role in the late steps of ribosome biogenesis. The sequence is that of GTPase Der from Burkholderia multivorans (strain ATCC 17616 / 249).